Consider the following 408-residue polypeptide: Arginine biosynthesis bifunctional protein ArgJ (408 aa).

Positions 158, 184, 195, 281, 403, and 408 each coordinate substrate. The active-site Nucleophile is the threonine 195.

This sequence belongs to the ArgJ family. In terms of assembly, heterotetramer of two alpha and two beta chains.

The protein resides in the cytoplasm. It catalyses the reaction N(2)-acetyl-L-ornithine + L-glutamate = N-acetyl-L-glutamate + L-ornithine. It carries out the reaction L-glutamate + acetyl-CoA = N-acetyl-L-glutamate + CoA + H(+). Its pathway is amino-acid biosynthesis; L-arginine biosynthesis; L-ornithine and N-acetyl-L-glutamate from L-glutamate and N(2)-acetyl-L-ornithine (cyclic): step 1/1. The protein operates within amino-acid biosynthesis; L-arginine biosynthesis; N(2)-acetyl-L-ornithine from L-glutamate: step 1/4. Its function is as follows. Catalyzes two activities which are involved in the cyclic version of arginine biosynthesis: the synthesis of N-acetylglutamate from glutamate and acetyl-CoA as the acetyl donor, and of ornithine by transacetylation between N(2)-acetylornithine and glutamate. This is Arginine biosynthesis bifunctional protein ArgJ from Bacillus cereus (strain ZK / E33L).